The primary structure comprises 30 residues: 2S seed storage-like protein (30 aa).

It belongs to the 2S seed storage albumins family. In terms of assembly, the mature protein is a heterodimer of a small and a large chain linked by 2 disulfide bonds. Extracted from castor bean.

In terms of biological role, this is a 2S seed storage protein. Inhibits spore germination in R.solani and F.oxysporum. Exhibits anti-trypsin activity. In Ricinus communis (Castor bean), this protein is 2S seed storage-like protein.